Reading from the N-terminus, the 327-residue chain is Serpentine receptor class alpha-12 (327 aa).

The Extracellular portion of the chain corresponds to M1–L18. A helical transmembrane segment spans residues F19–I39. At F40–R53 the chain is on the cytoplasmic side. Residues V54–P74 traverse the membrane as a helical segment. Residues L75–C98 are Extracellular-facing. The chain crosses the membrane as a helical span at residues I99–L119. Topologically, residues S120–A138 are cytoplasmic. The chain crosses the membrane as a helical span at residues L139 to I159. The Extracellular portion of the chain corresponds to R160 to T185. The helical transmembrane segment at F186–L206 threads the bilayer. The Cytoplasmic segment spans residues R207–A234. The helical transmembrane segment at I235–L255 threads the bilayer. Residues M256–N270 lie on the Extracellular side of the membrane. The chain crosses the membrane as a helical span at residues V271 to F291. Over S292–K327 the chain is Cytoplasmic.

This sequence belongs to the nematode receptor-like protein sra family. As to expression, expressed in neurons RIF/RIG and PVT.

It localises to the membrane. The chain is Serpentine receptor class alpha-12 (sra-12) from Caenorhabditis elegans.